The primary structure comprises 1025 residues: MPSNARAGNLKDPEVAELFFKDDPEKLFADLREIGHGSFGAVYFARDIRNNEVVAIKKMSYSGKQSNEKWQDIIKEVKFLQKLRHPNTIEYKGCYLREHTAWLVMEYCLGSASDLLEVHKKPLQEMEIAAITHGALQGLAYLHNHNMIHRDVKAGNILLTEPGLVKLGDFGSASIMAPANSFVGTPYWMAPEVILAMDEGQYDGKVDVWSLGITSIELAERKPPLFNMNAMSALYHIAQNESPVLQSNHWSEYFRNFVDSCLQKIPQDRPTSDMLLKHRFLQRERPQTVIMELIQRTKDAVRELDNLQYRKMKKILFQDTQNGPNTETTEEEEEAEQFLHCTGTITSMESSQSVPSMSISASSQSSSVNSLADASDDSGEMAMMQEGEHTVTSNSSVIHRLPAHDNIYDDPYQPEMEAQQSSSAARRRAYCRNRDHFATIRTASLVTRQIQEHEQDSALREQMSGYKRMRRQHQKQLMALENKLKSELDEHQQRLDKELEAHRSNFSAENEKISKKHQAIFEKEAKGGMTEEKKFQQHILGQQKKELTNLLESQKRQYKIRKEQLKEELQENQSTPKREKQEWLLRQKESMQHYQAEEEANLLRRQRQYFELQCRQYKRKMLLARHNLDQDLLREELNKKQTQRDLECAMLLRQHECTQELEFRHLQLLQHTRSELIRMQHQTELGNQLEYNKRREQELRQKHAAEVRQQPKSLKSKELQIKRQFQDTCKIQTRQYKALRNHLLETTPKSEHKSILKRLKDEQTRKLAILAEQYDHSINEMLSTQALRLDETQEAEYQELRIQLQKELELLNAYQSKIKIHTDAQHERELKELEQRVSIRRALLEQRIEEEMLALQTERSERIRSLLERQAREIEAFDSESMRLGFSNMALTGIPAEAFNQGYQAPPPGWPSRPVPRSGSHWSHGVQNTGAPQLWRQPTLLAPPSASWGLHPPGSSSSLSALPSSSSSSSSSPSSSSGGRPGLLLLRNSPQPLRRGGSGGPSEAGLSRSTSVTSQLSNGSHLSYS.

The 254-residue stretch at 28–281 (FADLREIGHG…SDMLLKHRFL (254 aa)) folds into the Protein kinase domain. ATP is bound by residues 34 to 42 (IGHGSFGAV) and lysine 57. Aspartate 151 serves as the catalytic Proton acceptor. The segment covering 349 to 373 (ESSQSVPSMSISASSQSSSVNSLAD) has biased composition (low complexity). The tract at residues 349–377 (ESSQSVPSMSISASSQSSSVNSLADASDD) is disordered. Coiled-coil stretches lie at residues 457–650 (SALR…ECAM) and 755–876 (ILKR…EIEA). Disordered stretches follow at residues 899-930 (FNQG…QNTG) and 945-1025 (SASW…LSYS). Over residues 905-914 (APPPGWPSRP) the composition is skewed to pro residues. The segment covering 947 to 986 (SWGLHPPGSSSSLSALPSSSSSSSSSPSSSSGGRPGLLLL) has biased composition (low complexity). The span at 1007 to 1025 (SRSTSVTSQLSNGSHLSYS) shows a compositional bias: polar residues.

This sequence belongs to the protein kinase superfamily. STE Ser/Thr protein kinase family. STE20 subfamily. Mg(2+) is required as a cofactor.

It catalyses the reaction L-seryl-[protein] + ATP = O-phospho-L-seryl-[protein] + ADP + H(+). The enzyme catalyses L-threonyl-[protein] + ATP = O-phospho-L-threonyl-[protein] + ADP + H(+). Its function is as follows. Serine/threonine-protein kinase involved in different processes such as apoptotic morphological changes, MAPK8/JNK and MAPK14/p38 MAPK signaling pathway. In terms of biological role, activates the JNK MAP kinase pathway. The sequence is that of Serine/threonine-protein kinase TAO2 (taok2) from Xenopus laevis (African clawed frog).